The following is a 154-amino-acid chain: Acidic phospholipase A2 2 (154 aa).

The N-terminal stretch at 1–19 is a signal peptide; it reads MHPAHLLVPLGVCVSLLGA. Positions 20–27 are excised as a propeptide; sequence ARIPPLPL. Intrachain disulfides connect cysteine 38-cysteine 104, cysteine 54-cysteine 153, cysteine 56-cysteine 72, cysteine 71-cysteine 132, cysteine 78-cysteine 125, cysteine 88-cysteine 118, and cysteine 111-cysteine 123. Ca(2+)-binding residues include tyrosine 55, glycine 57, and glycine 59. The active site involves histidine 75. Ca(2+) is bound at residue aspartate 76. Residue aspartate 126 is part of the active site.

The protein belongs to the phospholipase A2 family. Group I subfamily. D49 sub-subfamily. As to quaternary structure, monomer. It depends on Ca(2+) as a cofactor. In terms of tissue distribution, expressed by the venom gland.

It localises to the secreted. The catalysed reaction is a 1,2-diacyl-sn-glycero-3-phosphocholine + H2O = a 1-acyl-sn-glycero-3-phosphocholine + a fatty acid + H(+). In terms of biological role, snake venom phospholipase A2 (PLA2) that shows moderate enzymatic activity and exhibits procoagulant activity. PLA2 catalyzes the calcium-dependent hydrolysis of the 2-acyl groups in 3-sn-phosphoglycerides. The protein is Acidic phospholipase A2 2 of Pseudonaja textilis (Eastern brown snake).